The chain runs to 616 residues: Bifunctional 2-aminoethylphosphonate cytidylyltransferase/aminotransferase (616 aa).

Residues 1-240 are 2-aminoethylphosphonate cytidylyltransferase; that stretch reads MIKQAVILAG…VKNIYPHIVE (240 aa). Residues Leu8, Gly10, Gly11, Lys25, Thr83, Thr88, Glu104, and Ser105 each coordinate CMP-(2-aminoethyl)phosphonate. Residues Asp106 and Asp136 each coordinate Mg(2+). Positions 136, 153, and 196 each coordinate CMP-(2-aminoethyl)phosphonate. Glu220 and Asp222 together coordinate Mg(2+). The segment at 250–616 is 2-aminoethylphosphonate aminotransferase; sequence EVLLNPGPAT…EYMNGIGVGV (367 aa). Residues Ser313, Gly314, Thr315, Thr390, Lys441, and Thr490 each contribute to the pyridoxal 5'-phosphate site.

The protein in the N-terminal section; belongs to the LicC/PntC cytidylyltransferase family. It in the C-terminal section; belongs to the class-V pyridoxal-phosphate-dependent aminotransferase family. PhnW subfamily. In terms of assembly, homodimer. It depends on Mg(2+) as a cofactor. Zn(2+) serves as cofactor. The cofactor is pyridoxal 5'-phosphate.

It catalyses the reaction (2-aminoethyl)phosphonate + CTP = CMP-(2-aminoethyl)phosphonate + diphosphate. The catalysed reaction is (2-aminoethyl)phosphonate + pyruvate = phosphonoacetaldehyde + L-alanine. Its pathway is phosphorus metabolism; phosphonate biosynthesis. Its activity is regulated as follows. Cytidylyltransferase activity is inhibited in the presence of EDTA and is restored by the addition of Mg(2+) or Zn(2+). In terms of biological role, bifunctional transferase involved in the biosynthesis of cell-surface phosphonates. The aminotransferase region catalyzes the transformation of phosphonoacetaldehyde (PnAA) to 2-aminoethylphosphonate (AEP). The cytidylyltransferase region catalyzes the activation of 2-aminoethylphosphonate (AEP) to CMP-2-aminoethylphosphonate (CMP-AEP). Cannot use phosphocholine. Exhibits strong activity towards CTP, limited activity towards ATP and no activity with GTP. In Treponema denticola (strain ATCC 35405 / DSM 14222 / CIP 103919 / JCM 8153 / KCTC 15104), this protein is Bifunctional 2-aminoethylphosphonate cytidylyltransferase/aminotransferase.